The following is a 485-amino-acid chain: Velvet complex subunit B (485 aa).

Residues 33 to 459 enclose the Velvet domain; that stretch reads GRKHYSLEVV…GNQGQKLPLA (427 aa). Residues 107–353 form a disordered region; it reads VLHPSSVDRH…PPPPRHTYTR (247 aa). Composition is skewed to polar residues over residues 134–155, 234–243, 267–304, and 326–341; these read APQS…TLSQ, RSPSSSTSDH, SISS…SPHS, and THSQ…QHVS.

The protein belongs to the velvet family. VelB subfamily. In terms of assembly, component of the heterotrimeric velvet complex composed of laeA, veA and velB; VeA acting as a bridging protein between laeA and velB. Forms a heterodimeric complex with vosA; the formation of the velB-vosA complex is light-dependent.

It localises to the nucleus. Its subcellular location is the cytoplasm. Its function is as follows. Component of the velvet transcription factor complex that controls sexual/asexual developmental ratio in response to light, promoting sexual development in the darkness while stimulating asexual sporulation under illumination. The velvet complex acts as a global regulator for secondary metabolite gene expression. Component of the velB-VosA heterodimeric complex that plays a dual role in activating genes associated with spore maturation and repressing certain development-associated genes. The velB-VosA complex binds DNA through the DNA-binding domain of vosA that recognizes an 11-nucleotide consensus sequence 5'-CTGGCCGCGGC-3' consisting of two motifs in the promoters of key developmental regulatory genes. This is Velvet complex subunit B from Laccaria bicolor (strain S238N-H82 / ATCC MYA-4686) (Bicoloured deceiver).